The primary structure comprises 317 residues: Aspartate carbamoyltransferase catalytic subunit (317 aa).

Carbamoyl phosphate is bound by residues arginine 65 and threonine 66. Lysine 93 is an L-aspartate binding site. Carbamoyl phosphate contacts are provided by arginine 115, histidine 145, and glutamine 148. L-aspartate-binding residues include arginine 178 and arginine 233. Positions 274 and 275 each coordinate carbamoyl phosphate.

It belongs to the aspartate/ornithine carbamoyltransferase superfamily. ATCase family. Heterododecamer (2C3:3R2) of six catalytic PyrB chains organized as two trimers (C3), and six regulatory PyrI chains organized as three dimers (R2).

It carries out the reaction carbamoyl phosphate + L-aspartate = N-carbamoyl-L-aspartate + phosphate + H(+). It functions in the pathway pyrimidine metabolism; UMP biosynthesis via de novo pathway; (S)-dihydroorotate from bicarbonate: step 2/3. Functionally, catalyzes the condensation of carbamoyl phosphate and aspartate to form carbamoyl aspartate and inorganic phosphate, the committed step in the de novo pyrimidine nucleotide biosynthesis pathway. This is Aspartate carbamoyltransferase catalytic subunit from Bordetella parapertussis (strain 12822 / ATCC BAA-587 / NCTC 13253).